Here is a 338-residue protein sequence, read N- to C-terminus: Glycerol-3-phosphate dehydrogenase [NAD(P)+] 1 (338 aa).

The NADPH site is built by Ser11, Trp12, His32, Arg33, and Lys109. Residues Lys109, Gly140, and Ser142 each coordinate sn-glycerol 3-phosphate. An NADPH-binding site is contributed by Ala144. Residues Lys195, Asp248, Ser258, Arg259, and Asn260 each coordinate sn-glycerol 3-phosphate. Lys195 (proton acceptor) is an active-site residue. Arg259 provides a ligand contact to NADPH. Residues Val283 and Glu285 each contribute to the NADPH site.

Belongs to the NAD-dependent glycerol-3-phosphate dehydrogenase family.

The protein resides in the cytoplasm. It carries out the reaction sn-glycerol 3-phosphate + NAD(+) = dihydroxyacetone phosphate + NADH + H(+). The enzyme catalyses sn-glycerol 3-phosphate + NADP(+) = dihydroxyacetone phosphate + NADPH + H(+). It functions in the pathway membrane lipid metabolism; glycerophospholipid metabolism. Catalyzes the reduction of the glycolytic intermediate dihydroxyacetone phosphate (DHAP) to sn-glycerol 3-phosphate (G3P), the key precursor for phospholipid synthesis. This Lactobacillus delbrueckii subsp. bulgaricus (strain ATCC 11842 / DSM 20081 / BCRC 10696 / JCM 1002 / NBRC 13953 / NCIMB 11778 / NCTC 12712 / WDCM 00102 / Lb 14) protein is Glycerol-3-phosphate dehydrogenase [NAD(P)+] 1.